Consider the following 298-residue polypeptide: NAD kinase (298 aa).

Residue D80 is the Proton acceptor of the active site. NAD(+) contacts are provided by residues 80-81 (DG), 154-155 (ND), R182, D184, 195-200 (TAYALS), A219, and Q253.

The protein belongs to the NAD kinase family. A divalent metal cation serves as cofactor.

The protein localises to the cytoplasm. The enzyme catalyses NAD(+) + ATP = ADP + NADP(+) + H(+). In terms of biological role, involved in the regulation of the intracellular balance of NAD and NADP, and is a key enzyme in the biosynthesis of NADP. Catalyzes specifically the phosphorylation on 2'-hydroxyl of the adenosine moiety of NAD to yield NADP. The polypeptide is NAD kinase (Paracidovorax citrulli (strain AAC00-1) (Acidovorax citrulli)).